We begin with the raw amino-acid sequence, 397 residues long: MFHRIEEALEDLKQGKVVIVCDDENRENEGDFIALAEYITPETINFMITHGRGLVCVPITEEYAERLQLEPMVSHNTDSHHTAFTVSIDHVSTTTGISAHERATTIQELLNPASKGSDFNRPGHIFPLIAKEGGVLRRAGHTEAAVDLAKLCGAEPAGVICEIINEDGTMARVPDLLECAKQFDIKMITIEDLIAYRRHHETLVTREVEITLPTDFGTFHAIGYSNSLDMKEHIALVKGDISTGEPVLVRVHSECLTGDVFGSCRCDCGPQLHAALAQIEREGKGVLLYMRQEGRGIGLLNKLRAYKLQEEGLDTVEANEKLGFPADLRDYGIGAQILKDLGLQSLRLLTNNPRKIAGLQGYDLEVTERVPLQMPTKEENKTYLQTKASKLGHLLNL.

The DHBP synthase stretch occupies residues 1-199 (MFHRIEEALE…IEDLIAYRRH (199 aa)). Residues 26–27 (RE), D31, 138–142 (RAGHT), and E162 contribute to the D-ribulose 5-phosphate site. E27 is a Mg(2+) binding site. A Mg(2+)-binding site is contributed by H141. Positions 200–397 (HETLVTREVE…ASKLGHLLNL (198 aa)) are GTP cyclohydrolase II. 250-254 (RVHSE) contacts GTP. Residues C255, C266, and C268 each contribute to the Zn(2+) site. Residues Q271, 293 to 295 (EGR), and T315 contribute to the GTP site. D327 acts as the Proton acceptor; for GTP cyclohydrolase activity in catalysis. Catalysis depends on R329, which acts as the Nucleophile; for GTP cyclohydrolase activity. The GTP site is built by T350 and K355.

This sequence in the N-terminal section; belongs to the DHBP synthase family. In the C-terminal section; belongs to the GTP cyclohydrolase II family. Mg(2+) is required as a cofactor. It depends on Mn(2+) as a cofactor. Requires Zn(2+) as cofactor.

The enzyme catalyses D-ribulose 5-phosphate = (2S)-2-hydroxy-3-oxobutyl phosphate + formate + H(+). It carries out the reaction GTP + 4 H2O = 2,5-diamino-6-hydroxy-4-(5-phosphoribosylamino)-pyrimidine + formate + 2 phosphate + 3 H(+). It participates in cofactor biosynthesis; riboflavin biosynthesis; 2-hydroxy-3-oxobutyl phosphate from D-ribulose 5-phosphate: step 1/1. The protein operates within cofactor biosynthesis; riboflavin biosynthesis; 5-amino-6-(D-ribitylamino)uracil from GTP: step 1/4. Functionally, catalyzes the conversion of D-ribulose 5-phosphate to formate and 3,4-dihydroxy-2-butanone 4-phosphate. Its function is as follows. Catalyzes the conversion of GTP to 2,5-diamino-6-ribosylamino-4(3H)-pyrimidinone 5'-phosphate (DARP), formate and pyrophosphate. The sequence is that of Riboflavin biosynthesis protein RibBA from Bacillus mycoides (strain KBAB4) (Bacillus weihenstephanensis).